A 183-amino-acid chain; its full sequence is Apo-citrate lyase phosphoribosyl-dephospho-CoA transferase (183 aa).

It belongs to the CitX family.

The enzyme catalyses apo-[citrate lyase ACP] + 2'-(5''-triphospho-alpha-D-ribosyl)-3'-dephospho-CoA = holo-[citrate lyase ACP] + diphosphate. Functionally, transfers 2-(5''-triphosphoribosyl)-3'-dephosphocoenzyme-A on a serine residue to the apo-acyl carrier protein (gamma chain) of the citrate lyase to yield holo-acyl carrier protein. The sequence is that of Apo-citrate lyase phosphoribosyl-dephospho-CoA transferase from Escherichia coli O6:K15:H31 (strain 536 / UPEC).